Here is a 288-residue protein sequence, read N- to C-terminus: MEILRLAQSKKNIISLNMDLERDMQRIDEANQELLLKIQEKESEVQRLEHEITQTGDPAEDEEWEKENYTVMEREQALQELEEETARLERKNETLVHSISELQRKLTRKSQKIVRCEQGDLERTPEESKVKLQLLESSCADQEKELGKIMEDYVFVSQLCEDQALCIKKYQEALKRIEEELETGYLEREVSKVLSMDSEREKTVSLNEKDGFISNGALRFSKRIFRSLLFSTLFFIRLLGYLIFHLSFINPDLLVNALPKILSRDVLWKLRCFLFPSLTLETEDMLPH.

Residues 13–105 (IISLNMDLER…VHSISELQRK (93 aa)) are a coiled coil. Residues 227 to 249 (SLLFSTLFFIRLLGYLIFHLSFI) traverse the membrane as a helical segment.

As to expression, testis-specific. Expressed in spermatogenic cells of testis but disappear by the time mature spermatozoa are formed (at protein level).

Its subcellular location is the endoplasmic reticulum membrane. The protein localises to the nucleus membrane. The sequence is that of Transmembrane and coiled-coil domain-containing protein 5A (Tmco5a) from Rattus norvegicus (Rat).